The following is a 539-amino-acid chain: Membrane protein insertase YidC (539 aa).

Helical transmembrane passes span threonine 6–alanine 26, serine 341–valine 361, leucine 416–leucine 436, leucine 454–isoleucine 474, and proline 495–valine 515.

It belongs to the OXA1/ALB3/YidC family. Type 1 subfamily. In terms of assembly, interacts with the Sec translocase complex via SecD. Specifically interacts with transmembrane segments of nascent integral membrane proteins during membrane integration.

It is found in the cell inner membrane. Its function is as follows. Required for the insertion and/or proper folding and/or complex formation of integral membrane proteins into the membrane. Involved in integration of membrane proteins that insert both dependently and independently of the Sec translocase complex, as well as at least some lipoproteins. Aids folding of multispanning membrane proteins. This chain is Membrane protein insertase YidC, found in Vibrio vulnificus (strain YJ016).